We begin with the raw amino-acid sequence, 352 residues long: Nicotinate-nucleotide--dimethylbenzimidazole phosphoribosyltransferase (352 aa).

Glu-316 acts as the Proton acceptor in catalysis.

Belongs to the CobT family.

It catalyses the reaction 5,6-dimethylbenzimidazole + nicotinate beta-D-ribonucleotide = alpha-ribazole 5'-phosphate + nicotinate + H(+). It functions in the pathway nucleoside biosynthesis; alpha-ribazole biosynthesis; alpha-ribazole from 5,6-dimethylbenzimidazole: step 1/2. In terms of biological role, catalyzes the synthesis of alpha-ribazole-5'-phosphate from nicotinate mononucleotide (NAMN) and 5,6-dimethylbenzimidazole (DMB). The polypeptide is Nicotinate-nucleotide--dimethylbenzimidazole phosphoribosyltransferase (Yersinia enterocolitica serotype O:8 / biotype 1B (strain NCTC 13174 / 8081)).